A 616-amino-acid chain; its full sequence is Protein phosphatase EYA4 (616 aa).

Position 1 is an N-acetylmethionine (methionine 1). Disordered stretches follow at residues 1–66 (MEDT…VTTN), 186–211 (SQTQSPLQSGCLSYSPGFSTPQPGQT), and 277–345 (ADGT…DSDL). Glycyl lysine isopeptide (Lys-Gly) (interchain with G-Cter in SUMO2) cross-links involve residues lysine 14 and lysine 52. Over residues 56-66 (SGLSSTSVTTN) the composition is skewed to low complexity. Positions 277-311 (ADGTSSSTSTYQLQESLQGLTSQPGEFDTVQSPST) are enriched in polar residues. Serine 338 is modified (phosphoserine). Aspartate 352 functions as the Nucleophile in the catalytic mechanism. Mg(2+) is bound by residues aspartate 352, aspartate 354, and aspartate 580. The active-site Proton donor is aspartate 354.

It belongs to the HAD-like hydrolase superfamily. EYA family. As to quaternary structure, interacts with SIX3; translocates EYA4 from the cytoplasm to the nucleus and promotes activation of their target genes. Mg(2+) is required as a cofactor. In the embryo, expressed mainly in the craniofacial mesenchyme, dermamyotome and limb.

It localises to the cytoplasm. The protein resides in the nucleus. It carries out the reaction O-phospho-L-tyrosyl-[protein] + H2O = L-tyrosyl-[protein] + phosphate. In terms of biological role, tyrosine phosphatase that specifically dephosphorylates 'Tyr-142' of histone H2AX (H2AXY142ph). 'Tyr-142' phosphorylation of histone H2AX plays a central role in DNA repair and acts as a mark that distinguishes between apoptotic and repair responses to genotoxic stress. Promotes efficient DNA repair by dephosphorylating H2AX, promoting the recruitment of DNA repair complexes containing MDC1. Its function as histone phosphatase probably explains its role in transcription regulation during organogenesis. May be involved in development of the eye. The chain is Protein phosphatase EYA4 (Eya4) from Mus musculus (Mouse).